Consider the following 215-residue polypeptide: Nascent polypeptide-associated complex subunit alpha (215 aa).

The interval 1 to 81 (MPGEATDTVP…SEKKARKAMS (81 aa)) is disordered. A compositionally biased stretch (polar residues) spans 9–28 (VPATEQELPQPQAETGSGTE). The span at 29 to 42 (SDSDESVPELEEQD) shows a compositional bias: acidic residues. Position 43 is a phosphoserine; by ILK1 (S43). Residues 44–57 (TQATTQQAQLAAAA) are compositionally biased toward low complexity. The tract at residues 69 to 80 (QSRSEKKARKAM) is required for DNA-binding. Residues 70-135 (SRSEKKARKA…AKIEDLSQQA (66 aa)) enclose the NAC-A/B domain. The RNA/DNA-binding stretch occupies residues 93–108 (RVTIRKSKNILFVITK). Position 132 is a phosphoserine (S132). Residue K142 is modified to N6-acetyllysine; alternate. K142 participates in a covalent cross-link: Glycyl lysine isopeptide (Lys-Gly) (interchain with G-Cter in SUMO2); alternate. Residue T159 is modified to Phosphothreonine; by GSK3-beta. T161 bears the Phosphothreonine mark. 4 positions are modified to phosphoserine: S166, S186, S191, and S203. In terms of domain architecture, UBA spans 176-213 (VEVKDIELVMSQANVSRAKAVRALKNNSNDIVNAIMEL).

It belongs to the NAC-alpha family. Part of the nascent polypeptide-associated complex (NAC), which is a heterodimer of NACA and BTF3 (via NAC-A/B domains). NAC associates with ribosomes through the BTF3/NACB subunit and contacts the ribosomal protein L23, which is positioned near the exiting site. Both subunits can contact nascent polypeptide chains. NACA may also form homodimers, and only this form binds DNA. Interacts with TBP and JUN. Phosphorylation of Ser-43 by ILK during cell adhesion may promote nuclear localization. Phosphorylation of Thr-159 by GSK3B may promote proteasome mediated degradation.

The protein localises to the cytoplasm. The protein resides in the nucleus. Prevents inappropriate targeting of non-secretory polypeptides to the endoplasmic reticulum (ER). Binds to nascent polypeptide chains as they emerge from the ribosome and blocks their interaction with the signal recognition particle (SRP), which normally targets nascent secretory peptides to the ER. Also reduces the inherent affinity of ribosomes for protein translocation sites in the ER membrane (M sites). May act as a specific coactivator for JUN, binding to DNA and stabilizing the interaction of JUN homodimers with target gene promoters. The chain is Nascent polypeptide-associated complex subunit alpha (NACA) from Bos taurus (Bovine).